The following is a 456-amino-acid chain: Enolase (456 aa).

Q164 is a binding site for (2R)-2-phosphoglycerate. Residue E207 is the Proton donor of the active site. Mg(2+)-binding residues include D244, E287, and D314. (2R)-2-phosphoglycerate contacts are provided by K339, R368, S369, and K390. K339 acts as the Proton acceptor in catalysis.

The protein belongs to the enolase family. Component of the RNA degradosome, a multiprotein complex involved in RNA processing and mRNA degradation. Requires Mg(2+) as cofactor.

Its subcellular location is the cytoplasm. It localises to the secreted. The protein localises to the cell surface. It catalyses the reaction (2R)-2-phosphoglycerate = phosphoenolpyruvate + H2O. The protein operates within carbohydrate degradation; glycolysis; pyruvate from D-glyceraldehyde 3-phosphate: step 4/5. In terms of biological role, catalyzes the reversible conversion of 2-phosphoglycerate (2-PG) into phosphoenolpyruvate (PEP). It is essential for the degradation of carbohydrates via glycolysis. This chain is Enolase, found in Francisella tularensis subsp. novicida (strain U112).